A 482-amino-acid polypeptide reads, in one-letter code: Protein DETOXIFICATION 9 (482 aa).

Transmembrane regions (helical) follow at residues 32 to 49 (VASMAAPMVAVNMSQYLL), 64 to 84 (ALAGIALGSSFANVTGFGVLF), 111 to 131 (FTSIVFLLIISVPISILWMFM), 144 to 164 (IAELAGVYCLWLVPALFGYSV), 180 to 200 (PMVLSSLAALSFHVPLCWLMV), 209 to 229 (GAAASIGISYWLNAVFLWVYM), 261 to 281 (AMMCCLEWLAFEVITLLSGLL), 289 to 309 (SVISICLTTSSLHYNLVNGIG), 332 to 352 (AAAAIIIAAVESVIVSSSLFL), 374 to 394 (ITPILCISILMDSFLTVLSGI), 403 to 423 (IGAYVNITSYYVIGIPVGLLL), and 435 to 455 (WAGLVTGSTLQTLILFLVIGF).

The protein belongs to the multi antimicrobial extrusion (MATE) (TC 2.A.66.1) family.

The protein localises to the membrane. The polypeptide is Protein DETOXIFICATION 9 (Arabidopsis thaliana (Mouse-ear cress)).